The chain runs to 160 residues: 2-C-methyl-D-erythritol 2,4-cyclodiphosphate synthase (160 aa).

Residues D9 and H11 each contribute to the a divalent metal cation site. 4-CDP-2-C-methyl-D-erythritol 2-phosphate contacts are provided by residues D9–H11 and H35–S36. Residue H43 participates in a divalent metal cation binding. Residues D57 to G59, F62 to D66, T133 to E136, F140, and R143 contribute to the 4-CDP-2-C-methyl-D-erythritol 2-phosphate site.

This sequence belongs to the IspF family. Homotrimer. A divalent metal cation is required as a cofactor.

The enzyme catalyses 4-CDP-2-C-methyl-D-erythritol 2-phosphate = 2-C-methyl-D-erythritol 2,4-cyclic diphosphate + CMP. The protein operates within isoprenoid biosynthesis; isopentenyl diphosphate biosynthesis via DXP pathway; isopentenyl diphosphate from 1-deoxy-D-xylulose 5-phosphate: step 4/6. In terms of biological role, involved in the biosynthesis of isopentenyl diphosphate (IPP) and dimethylallyl diphosphate (DMAPP), two major building blocks of isoprenoid compounds. Catalyzes the conversion of 4-diphosphocytidyl-2-C-methyl-D-erythritol 2-phosphate (CDP-ME2P) to 2-C-methyl-D-erythritol 2,4-cyclodiphosphate (ME-CPP) with a corresponding release of cytidine 5-monophosphate (CMP). This is 2-C-methyl-D-erythritol 2,4-cyclodiphosphate synthase from Haemophilus ducreyi (strain 35000HP / ATCC 700724).